The chain runs to 102 residues: Integration host factor subunit alpha (102 aa).

Positions 49–71 are disordered; sequence FGNFQLRTKPQRPGRNPKTGEEI.

Belongs to the bacterial histone-like protein family. Heterodimer of an alpha and a beta chain.

In terms of biological role, this protein is one of the two subunits of integration host factor, a specific DNA-binding protein that functions in genetic recombination as well as in transcriptional and translational control. This Nitrosomonas eutropha (strain DSM 101675 / C91 / Nm57) protein is Integration host factor subunit alpha.